We begin with the raw amino-acid sequence, 366 residues long: Ribosomal RNA large subunit methyltransferase M (366 aa).

S-adenosyl-L-methionine contacts are provided by residues serine 188, 221-224 (CPGG), aspartate 240, aspartate 260, and aspartate 277. Catalysis depends on lysine 306, which acts as the Proton acceptor.

The protein belongs to the class I-like SAM-binding methyltransferase superfamily. RNA methyltransferase RlmE family. RlmM subfamily. In terms of assembly, monomer.

It is found in the cytoplasm. The enzyme catalyses cytidine(2498) in 23S rRNA + S-adenosyl-L-methionine = 2'-O-methylcytidine(2498) in 23S rRNA + S-adenosyl-L-homocysteine + H(+). In terms of biological role, catalyzes the 2'-O-methylation at nucleotide C2498 in 23S rRNA. The chain is Ribosomal RNA large subunit methyltransferase M from Salmonella dublin (strain CT_02021853).